We begin with the raw amino-acid sequence, 1030 residues long: Importin beta-like SAD2 homolog (1030 aa).

Met1 carries the post-translational modification N-acetylmethionine. The Importin N-terminal domain occupies 25–99 (AEQSLNQLQH…RNQILVFVSQ (75 aa)). Disordered stretches follow at residues 886–928 (AAKA…GSTL) and 940–964 (SYSDDDDFSDDDFSDDEELESPIDE). 2 stretches are compositionally biased toward acidic residues: residues 890 to 924 (EEEEEDEDGDDDDMDEFQTDDEDEDGDDENPDETD) and 943 to 964 (DDDDFSDDDFSDDEELESPIDE).

It belongs to the importin beta family.

The protein resides in the cytoplasm. The protein localises to the nucleus. In terms of biological role, functions probably in nuclear protein import, either by acting as autonomous nuclear transport receptor or as an adapter-like protein in association with other importin subunits. The sequence is that of Importin beta-like SAD2 homolog from Arabidopsis thaliana (Mouse-ear cress).